Consider the following 222-residue polypeptide: Chalcone--flavanone isomerase 1 (222 aa).

3 residues coordinate substrate: Thr48, Asn113, and Thr190.

The protein belongs to the chalcone isomerase family.

The enzyme catalyses a chalcone = a flavanone.. Its pathway is secondary metabolite biosynthesis; flavonoid biosynthesis. Catalyzes the intramolecular cyclization of bicyclic chalcones into tricyclic (S)-flavanones. Responsible for the isomerization of 4,2',4',6'-tetrahydroxychalcone (also termed chalcone) into naringenin. This Medicago sativa (Alfalfa) protein is Chalcone--flavanone isomerase 1 (CHI1).